A 934-amino-acid chain; its full sequence is Serine/threonine-protein kinase PknD (934 aa).

The 293-residue stretch at 4 to 296 (YELIRLIGKG…ELRQALQPYL (293 aa)) folds into the Protein kinase domain. ATP-binding positions include 10–18 (IGKGGMGEV) and Lys-33. The active-site Proton acceptor is Asp-138.

The protein belongs to the protein kinase superfamily. Ser/Thr protein kinase family. As to quaternary structure, interacts with Pkn1. Autophosphorylated on serine and threonine residues. Present in elementary bodies 40 hours post-infection as 2 bands of approximately 55 to 60 and 45 to 50 kDa, which may be due to differential phosphorylation as well as degradation; an enzymatically active full-length protein can also be detected.

The enzyme catalyses L-seryl-[protein] + ATP = O-phospho-L-seryl-[protein] + ADP + H(+). The catalysed reaction is L-threonyl-[protein] + ATP = O-phospho-L-threonyl-[protein] + ADP + H(+). Its function is as follows. Together with the serine/threonine kinase Pkn1, may play a role in the specific interactions with host proteins during intracellular growth. Autophosphorylates and also phosphorylates Pkn1. The polypeptide is Serine/threonine-protein kinase PknD (Chlamydia trachomatis serovar L2 (strain ATCC VR-902B / DSM 19102 / 434/Bu)).